The sequence spans 628 residues: Hepatocyte nuclear factor 1-alpha (628 aa).

The dimerization stretch occupies residues methionine 1–glycine 31. The 32-residue stretch at methionine 1 to glutamate 32 folds into the HNF-p1 domain. Residues glycine 47–glutamate 79 form a disordered region. Serine 70 carries the phosphoserine modification. The residue at position 74 (threonine 74) is a Phosphothreonine. The POU-specific atypical domain occupies lysine 87 to glutamine 182. Serine 93 carries the phosphoserine modification. Lysine 117 is covalently cross-linked (Glycyl lysine isopeptide (Lys-Gly) (interchain with G-Cter in ubiquitin)). 4 interaction with DNA regions span residues glutamine 130–glutamate 132, histidine 143–asparagine 149, lysine 155–lysine 158, and arginine 203–tryptophan 206. The tract at residues glycine 183–lysine 205 is disordered. The Nuclear localization signal motif lies at lysine 197–lysine 205. The homeobox; HNF1-type DNA-binding region spans glycine 199–histidine 279. At serine 247 the chain carries Phosphoserine. Interaction with DNA regions lie at residues arginine 263 to tyrosine 265 and asparagine 270 to lysine 273. 2 disordered regions span residues aspartate 284 to glycine 338 and phenylalanine 541 to serine 585. A compositionally biased stretch (pro residues) spans glycine 288–alanine 298. Serine 313 is modified (phosphoserine). Polar residues-rich tracts occupy residues glutamine 324 to glycine 338 and serine 558 to histidine 575.

The protein belongs to the HNF1 homeobox family. As to quaternary structure, binds DNA as a dimer. Heterotetramer with PCBD1; formed by a dimer of dimers. Interacts with PCBD1. Interacts with BHLHE41. Interacts with NR5A2. Interacts with SPOP; this interaction promotes ubiquitination and degradation of HNF1A. Ubiquitinated in s SPOP-dependent manner; leading to prteasomal degradation. Liver.

It localises to the nucleus. Transcriptional activator that regulates the tissue specific expression of multiple genes, especially in pancreatic islet cells and in liver. Binds to the inverted palindrome 5'-GTTAATNATTAAC-3'. Activates the transcription of CYP1A2, CYP2E1 and CYP3A11. The sequence is that of Hepatocyte nuclear factor 1-alpha (Hnf1a) from Rattus norvegicus (Rat).